The chain runs to 484 residues: Diaminopimelate decarboxylase 1, chloroplastic (484 aa).

The span at 1–28 (MAAATQFLSQPSSLNPHQLKNQTSQRSR) shows a compositional bias: polar residues. The interval 1 to 30 (MAAATQFLSQPSSLNPHQLKNQTSQRSRSI) is disordered. A chloroplast-targeting transit peptide spans 1–49 (MAAATQFLSQPSSLNPHQLKNQTSQRSRSIPVLSLKSTLKPLKRLSVKA). A50 is modified (N-acetylalanine). K125 is subject to N6-(pyridoxal phosphate)lysine. Residues G304 and 340-343 (EPGR) each bind pyridoxal 5'-phosphate. Substrate contacts are provided by R343, R379, and Y383. C411 (proton donor) is an active-site residue. 2 residues coordinate substrate: E412 and Y440. Pyridoxal 5'-phosphate is bound at residue Y440.

It belongs to the Orn/Lys/Arg decarboxylase class-II family. LysA subfamily. In terms of assembly, homodimer. The cofactor is pyridoxal 5'-phosphate.

It is found in the plastid. Its subcellular location is the chloroplast. It catalyses the reaction meso-2,6-diaminopimelate + H(+) = L-lysine + CO2. It functions in the pathway amino-acid biosynthesis; L-lysine biosynthesis via DAP pathway; L-lysine from DL-2,6-diaminopimelate: step 1/1. Specifically catalyzes the decarboxylation of meso-diaminopimelate (meso-DAP) to L-lysine. This chain is Diaminopimelate decarboxylase 1, chloroplastic (LYSA1), found in Arabidopsis thaliana (Mouse-ear cress).